Here is a 277-residue protein sequence, read N- to C-terminus: Large ribosomal subunit protein uL2 (277 aa).

Basic residues-rich tracts occupy residues 210–219 and 259–277; these read RARWAGKRPQ and TRSKKARSNKFIVRSRNKK. The tract at residues 210–277 is disordered; it reads RARWAGKRPQ…KFIVRSRNKK (68 aa).

This sequence belongs to the universal ribosomal protein uL2 family. Part of the 50S ribosomal subunit. Forms a bridge to the 30S subunit in the 70S ribosome.

Its function is as follows. One of the primary rRNA binding proteins. Required for association of the 30S and 50S subunits to form the 70S ribosome, for tRNA binding and peptide bond formation. It has been suggested to have peptidyltransferase activity; this is somewhat controversial. Makes several contacts with the 16S rRNA in the 70S ribosome. The chain is Large ribosomal subunit protein uL2 from Ligilactobacillus salivarius (strain UCC118) (Lactobacillus salivarius).